The chain runs to 149 residues: Transcriptional repressor NrdR (149 aa).

The segment at 3–34 (CPFCSAVDTKVIDSRLVGEGSQVRRRRQCLVC) is a zinc-finger region. Positions 49–139 (PRVIKSNEVR…VYRSFEDIRE (91 aa)) constitute an ATP-cone domain.

This sequence belongs to the NrdR family. The cofactor is Zn(2+).

In terms of biological role, negatively regulates transcription of bacterial ribonucleotide reductase nrd genes and operons by binding to NrdR-boxes. The chain is Transcriptional repressor NrdR from Pectobacterium atrosepticum (strain SCRI 1043 / ATCC BAA-672) (Erwinia carotovora subsp. atroseptica).